Here is an 845-residue protein sequence, read N- to C-terminus: Beta-mannosidase B (845 aa).

N-linked (GlcNAc...) asparagine glycosylation occurs at Asn-252. The active-site Proton donor is the Glu-432. N-linked (GlcNAc...) asparagine glycans are attached at residues Asn-717 and Asn-723.

Belongs to the glycosyl hydrolase 2 family. Beta-mannosidase B subfamily.

The enzyme catalyses Hydrolysis of terminal, non-reducing beta-D-mannose residues in beta-D-mannosides.. Its pathway is glycan metabolism; N-glycan degradation. Its function is as follows. Exoglycosidase that cleaves the single beta-linked mannose residue from the non-reducing end of beta-mannosidic oligosaccharides of various complexity and length. Prefers mannobiose over mannotriose and has no activity against polymeric mannan. Is also severely restricted by galactosyl substitutions at the +1 subsite. This Aspergillus fumigatus (strain CBS 144.89 / FGSC A1163 / CEA10) (Neosartorya fumigata) protein is Beta-mannosidase B (mndB).